The primary structure comprises 316 residues: Melanocyte-stimulating hormone receptor (316 aa).

Over 1 to 37 (MAVQGSQRRLLGSLNSTPTAIPQLGLAANQTGARCLE) the chain is Extracellular. Asn-29 carries N-linked (GlcNAc...) asparagine glycosylation. A helical transmembrane segment spans residues 38 to 63 (VSIPDGLFLSLGLVSLVENVLVVATI). Residues 64 to 72 (AKNRNLHSP) are Cytoplasmic-facing. Residues 73–93 (MYCFICCLALSDLLVSGSNVV) form a helical membrane-spanning segment. Residues 94 to 117 (DTLLLLLEAGALAARAAVLQQLDN) lie on the Extracellular side of the membrane. A helical membrane pass occupies residues 118–139 (VIDVITCSSMLSSLCFLGAIAV). Over 140–162 (DRYISIFYALRYRSIVTLPRARR) the chain is Cytoplasmic. The chain crosses the membrane as a helical span at residues 163-182 (AVAAIWVASVLFSTLFIAYY). At 183-190 (DHTAVLLC) the chain is on the extracellular side. A helical membrane pass occupies residues 191–210 (LVVFFLAMLVLMAVLYVHML). Over 211–239 (ARACQHAQGIARLHKRQRPVHKGFGLKGP) the chain is Cytoplasmic. The helical transmembrane segment at 240 to 265 (VTLTILLGIFFLCWGPFFLHLTLIVL) threads the bilayer. The Extracellular portion of the chain corresponds to 266 to 278 (CPEHPTCGCIFKN). A helical membrane pass occupies residues 279–299 (FNLFLALIICNAIIDPLIYAF). At 300–316 (HSQELRRTLKEVLTCSW) the chain is on the cytoplasmic side. Cys-314 carries S-palmitoyl cysteine lipidation.

The protein belongs to the G-protein coupled receptor 1 family. In terms of assembly, interacts with MGRN1, but does not undergo MGRN1-mediated ubiquitination; this interaction competes with GNAS-binding and thus inhibits agonist-induced cAMP production. Interacts with OPN3; the interaction results in a decrease in MC1R-mediated cAMP signaling and ultimately a decrease in melanin production in melanocytes.

It is found in the cell membrane. In terms of biological role, receptor for MSH (alpha, beta and gamma) and ACTH. The activity of this receptor is mediated by G proteins which activate adenylate cyclase. Mediates melanogenesis, the production of eumelanin (black/brown) and phaeomelanin (red/yellow), via regulation of cAMP signaling in melanocytes. This chain is Melanocyte-stimulating hormone receptor (MC1R), found in Gorilla gorilla gorilla (Western lowland gorilla).